A 138-amino-acid polypeptide reads, in one-letter code: uncharacterized protein (138 aa).

A disordered region spans residues 1–27 (MEGELIENNGLDIYDTSETPKKRGRPA).

This is an uncharacterized protein from Escherichia coli (strain K12).